A 415-amino-acid chain; its full sequence is G-protein coupled receptor daf-38 (415 aa).

The segment covering 1–19 (MLLPSNLTTSTLMTSSSES) has biased composition (low complexity). The segment at 1–25 (MLLPSNLTTSTLMTSSSESYDADNP) is disordered. The Extracellular portion of the chain corresponds to 1 to 35 (MLLPSNLTTSTLMTSSSESYDADNPGLPPEPILSD). Residues 36–56 (YVEMFTLVLNFIVGAPLNLAA) form a helical membrane-spanning segment. Residues 57-75 (YTQLSERPTSTRLDLLKRS) are Cytoplasmic-facing. The helical transmembrane segment at 76–96 (LNYSDLLVLFIYVPSRACWLL) threads the bilayer. Residues 97–108 (TYDWRGGDALCK) lie on the Extracellular side of the membrane. An intrachain disulfide couples cysteine 107 to cysteine 187. A helical membrane pass occupies residues 109–129 (IVKMFHTFAFQSSSNVIVCIA). The Cytoplasmic portion of the chain corresponds to 130–152 (VDRLLSVLSPSHHSPNKALKRTK). The chain crosses the membrane as a helical span at residues 153–173 (MMLIVAWIVALVISCPQLFIW). Topologically, residues 174–222 (KAYLALPEYNWSQCLQIWEIARMEKFNKPQVVPEFDAEFWYSILHISLV) are extracellular. The chain crosses the membrane as a helical span at residues 223–243 (FWIPCIIIMLSYIIVISWVWI). Residues 244–345 (NSRPSIRHTS…NLNRSRALRV (102 aa)) are Cytoplasmic-facing. Residues 346 to 366 (SLLLVVAYIICWLPYNLISLI) form a helical membrane-spanning segment. At 367-382 (QFLDRDFFSSYLKHVH) the chain is on the extracellular side. Residues 383 to 403 (FCQQLIIFNSVVNPWLYGFFG) form a helical membrane-spanning segment. The Cytoplasmic portion of the chain corresponds to 404-415 (PRRPSTTGAGRH).

It belongs to the G-protein coupled receptor 1 family. As to quaternary structure, heterodimer; with daf-37. Expressed in the ASI and ASK chemosensory neurons and in the IL-2 interneurons, but weakly expressed in other head neurons in hermaphrodites.

It is found in the cell membrane. In terms of biological role, G-protein coupled receptor (GPCR) that forms a heterodimer with daf-37 to control dauer formation and behavior. Required for the response to dauer inducing pheromones such as the ascarosides ascr#2, ascr#3 and ascr#5. This Caenorhabditis elegans protein is G-protein coupled receptor daf-38.